Reading from the N-terminus, the 398-residue chain is Acetate kinase (398 aa).

Asparagine 10 provides a ligand contact to Mg(2+). Lysine 17 is a binding site for ATP. Arginine 91 serves as a coordination point for substrate. Catalysis depends on aspartate 148, which acts as the Proton donor/acceptor. Residues 208–212 (HLGNG), 283–285 (DCR), and 331–335 (GIGEN) each bind ATP. Glutamate 385 provides a ligand contact to Mg(2+).

This sequence belongs to the acetokinase family. In terms of assembly, homodimer. Mg(2+) serves as cofactor. It depends on Mn(2+) as a cofactor.

The protein resides in the cytoplasm. It carries out the reaction acetate + ATP = acetyl phosphate + ADP. It participates in metabolic intermediate biosynthesis; acetyl-CoA biosynthesis; acetyl-CoA from acetate: step 1/2. Functionally, catalyzes the formation of acetyl phosphate from acetate and ATP. Can also catalyze the reverse reaction. The polypeptide is Acetate kinase (Shewanella loihica (strain ATCC BAA-1088 / PV-4)).